Here is a 129-residue protein sequence, read N- to C-terminus: MARVKRAVNAHKKRRSILKASRGYRGQRSRLYRKAKEQQLHSLNYAYRDRRARKGEFRKLWIARINAAARLNDITYNRLIQGLKAAGVEVDRKNLADIAISDPAAFTALVDVARAALPEDVNAPSGEAA.

This sequence belongs to the bacterial ribosomal protein bL20 family.

Its function is as follows. Binds directly to 23S ribosomal RNA and is necessary for the in vitro assembly process of the 50S ribosomal subunit. It is not involved in the protein synthesizing functions of that subunit. This is Large ribosomal subunit protein bL20 from Mycobacterium tuberculosis (strain ATCC 25177 / H37Ra).